The following is a 129-amino-acid chain: NHP2-like protein 1 homolog (129 aa).

It belongs to the eukaryotic ribosomal protein eL8 family.

It is found in the nucleus. It localises to the nucleolus. Functionally, binds to the 5'-stem-loop of U4 snRNA and may play a role in the late stage of spliceosome assembly. The protein undergoes a conformational change upon RNA-binding. This chain is NHP2-like protein 1 homolog, found in Dictyostelium discoideum (Social amoeba).